Consider the following 450-residue polypeptide: Tubulin alpha chain (450 aa).

Gln-11 serves as a coordination point for GTP. An N6-acetyllysine modification is found at Lys-40. 7 residues coordinate GTP: Glu-71, Ser-140, Gly-144, Thr-145, Thr-179, Asn-206, and Asn-228. Glu-71 provides a ligand contact to Mg(2+). Residue Glu-254 is part of the active site.

This sequence belongs to the tubulin family. As to quaternary structure, dimer of alpha and beta chains. A typical microtubule is a hollow water-filled tube with an outer diameter of 25 nm and an inner diameter of 15 nM. Alpha-beta heterodimers associate head-to-tail to form protofilaments running lengthwise along the microtubule wall with the beta-tubulin subunit facing the microtubule plus end conferring a structural polarity. Microtubules usually have 13 protofilaments but different protofilament numbers can be found in some organisms and specialized cells. Mg(2+) serves as cofactor. Post-translationally, acetylation of alpha chains at Lys-40 stabilizes microtubules and affects affinity and processivity of microtubule motors. This modification has a role in multiple cellular functions, ranging from cell motility, cell cycle progression or cell differentiation to intracellular trafficking and signaling.

Its subcellular location is the cytoplasm. The protein resides in the cytoskeleton. The enzyme catalyses GTP + H2O = GDP + phosphate + H(+). In terms of biological role, tubulin is the major constituent of microtubules, a cylinder consisting of laterally associated linear protofilaments composed of alpha- and beta-tubulin heterodimers. Microtubules grow by the addition of GTP-tubulin dimers to the microtubule end, where a stabilizing cap forms. Below the cap, tubulin dimers are in GDP-bound state, owing to GTPase activity of alpha-tubulin. This chain is Tubulin alpha chain, found in Euplotes vannus (Marine ciliate).